A 269-amino-acid chain; its full sequence is Cbp/p300-interacting transactivator 2 (269 aa).

The segment at 142–200 (AGHQMNGTNQHFRDCNPKHSGGSSTPGGAGGSGTPGGSGGTSGGAGGSSAGGSGGGSTM) is disordered. Residues 165–198 (STPGGAGGSGTPGGSGGTSGGAGGSSAGGSGGGS) are compositionally biased toward gly residues.

It belongs to the CITED family. Interacts (via C-terminus) with EP300 (via CH1 domain); the interaction is stimulated in response to hypoxia. Interacts with PPARA. Interacts (via C-terminus) with TFAP2A, TFAP2B and TFAP2C. Interacts (via C-terminus) with SMAD2. Interacts (via C-terminus) with SMAD3 (via MH2 domain). Interacts with LHX2 (via LIM domains). Interacts with WT1 isoform 1 and isoform 3. Ubiquitous.

It localises to the nucleus. In terms of biological role, transcriptional coactivator of the p300/CBP-mediated transcription complex. Acts as a bridge, linking TFAP2 transcription factors and the p300/CBP transcriptional coactivator complex in order to stimulate TFAP2-mediated transcriptional activation. Positively regulates TGF-beta signaling through its association with the SMAD/p300/CBP-mediated transcriptional coactivator complex. Stimulates the peroxisome proliferator-activated receptors PPARA transcriptional activity. Enhances estrogen-dependent transactivation mediated by estrogen receptors. Also acts as a transcriptional corepressor; interferes with the binding of the transcription factors HIF1A or STAT2 and the p300/CBP transcriptional coactivator complex. Participates in sex determination and early gonad development by stimulating transcription activation of SRY. Plays a role in controlling left-right patterning during embryogenesis; potentiates transcriptional activation of NODAL-mediated gene transcription in the left lateral plate mesoderm (LPM). Plays an essential role in differentiation of the adrenal cortex from the adrenogonadal primordium (AGP); stimulates WT1-mediated transcription activation thereby up-regulating the nuclear hormone receptor NR5A1 promoter activity. Associates with chromatin to the PITX2 P1 promoter region. The sequence is that of Cbp/p300-interacting transactivator 2 (Cited2) from Mus musculus (Mouse).